Reading from the N-terminus, the 673-residue chain is MAPNSVAVTMEKPDNFSLLEINGSDPSSFPDKRKSISPKQFSWFLLLKAHRLISCLSWLVSSVKKRIAFSAKNINEEEDPKSRGKQMYRFIKACLVISIIALSIEIVAHFKKWNLDLINRPSWEVYGLVEWSYMAWLSFRSDYIAPLVISLSRFCTVLFLIQSLDRLVLCLGCFWIKFKKIEPKLTEESIDLEDPSSFPMVLIQIPMCNEREVYEQSIGAASQLDWPKDRILIQVLDDSDDPNLQLLIKEEVSVWAEKGVNIIYRHRLIRTGYKAGNLKSAMTCDYVKDYEFVTIFDADFTPNPDFLKKTVPHFKGNPELGLVQARWSFVNKDENLLTRLQNINLCFHFEVEQQVNGVFLNFFGFNGTAGVWRIKALEESGGWLERTTVEDMDIAVRAHLNGWKFIYLNDVEVTCELPESYEAYKKQQHRWHSGPMQLFRLCLPSIIKSKISVWKKANLIFLFFLLRKLILPFYSFTLFCIILPLTMFIPEAELPLWIICYVPIFISLLNILPSPKSFPFLVPYLLFENTMSITKFNAMISGLFQFGSAYEWVVTKKTGRSSESDLLAFAEKEEKLHRRNSESGLELLSKLKEQETNLVGQETVKKSLGGLMRPKNKKKTNMVFKKELGLAFLLLTAAARSFLSAHGLHFYFLLFQGLSFLVVGLDLIGEQIS.

Transmembrane regions (helical) follow at residues 90-110 and 144-164; these read FIKA…VAHF and IAPL…IQSL. Aspartate 238 is an active-site residue. 2 residues coordinate substrate: aspartate 297 and aspartate 299. The active site involves aspartate 391. A run of 2 helical transmembrane segments spans residues 469–489 and 494–514; these read LILP…TMFI and LPLW…ILPS. Residue serine 581 is modified to Phosphoserine. 2 helical membrane passes run 623–643 and 648–668; these read VFKK…RSFL and LHFY…LDLI.

It belongs to the glycosyltransferase 2 family. Plant cellulose synthase-like C subfamily. Homodimer. Interacts with XXT5. Interacts with FUT1, MUR3 and XLT2. As to expression, expressed in seedlings, roots, leaves, stems, flowers and seeds.

Its subcellular location is the golgi apparatus membrane. Its function is as follows. Beta-1,4-glucan synthase rather involved in the synthesis of the xyloglucan backbone than cellulose. Seems to work simultaneously with xyloglucan 6-xylosyltransferase. Xyloglucan is a noncellulosic polysaccharides of plant cell wall and consists of a glucan backbone substituted by xylose, galactose and fucose. Associates with other xyloglucan-synthesizing enzymes to form multiprotein complexes for xyloglucan synthesis in the Golgi. The chain is Xyloglucan glycosyltransferase 4 from Arabidopsis thaliana (Mouse-ear cress).